Consider the following 800-residue polypeptide: DEP domain-containing protein 1A (800 aa).

Residues 24–108 (FRAGMPLKKH…DNSQLYRFPS (85 aa)) enclose the DEP domain. Disordered stretches follow at residues 147–173 (ETLENVDPETQESPVGSSSGETERSRE), 306–326 (SQPGKRKNQEEPNCPQPAKNP), and 459–485 (INTSGSSVSSQLSADLRRNNSRPARAR). Residues 281-321 (PLLTYQYYELFVNILVMCGYITTPKSQPGKRKNQEEPNCPQ) enclose the Rho-GAP domain. A compositionally biased stretch (low complexity) spans 459 to 468 (INTSGSSVSS).

The sequence is that of DEP domain-containing protein 1A (depdc1a) from Danio rerio (Zebrafish).